We begin with the raw amino-acid sequence, 269 residues long: MKKKFSLIAMAGAALLLLTACGTTAVTSSSTNLWDQIVYGFAQVIRFLSFGGLTGVGIILFTIVIRAALLPLMNIQIKSSQRMQEIQPEIKKIQAKYPSKDMESRRLMNEEIQKLYAENKVNPYMGCLPLVVQMPVLWALYQALSRVDFLKHGTFLWFEIGAKDPTFILPILAAVFTFLSSYLMMKSAPERNAMTTSMTYIMPIFILIMGVNFAAGIALYWVISNAFQVFQTMLLANPYKIIAAREAKVQVEKDKIKAREKALKKARKK.

An N-terminal signal peptide occupies residues 1–20; the sequence is MKKKFSLIAMAGAALLLLTA. Cys21 carries the N-palmitoyl cysteine lipid modification. Cys21 carries S-diacylglycerol cysteine lipidation. 4 helical membrane passes run 45-65, 124-144, 165-185, and 203-223; these read IRFLSFGGLTGVGIILFTIVI, YMGCLPLVVQMPVLWALYQAL, PTFILPILAAVFTFLSSYLMM, and PIFILIMGVNFAAGIALYWVI.

This sequence belongs to the OXA1/ALB3/YidC family. Type 2 subfamily.

It is found in the cell membrane. Its function is as follows. Required for the insertion and/or proper folding and/or complex formation of integral membrane proteins into the membrane. Involved in integration of membrane proteins that insert both dependently and independently of the Sec translocase complex, as well as at least some lipoproteins. The chain is Membrane protein insertase YidC 1 from Lactococcus lactis subsp. lactis (strain IL1403) (Streptococcus lactis).